The sequence spans 480 residues: Ochratoxinase (480 aa).

Residues histidine 111, histidine 113, lysine 246, histidine 287, and histidine 307 each coordinate Zn(2+). Lysine 246 is a catalytic residue. The active site involves aspartate 378.

It belongs to the metallo-dependent hydrolases superfamily. Ochratoxinase amidase 2 family. As to quaternary structure, homooctamer. Zn(2+) is required as a cofactor.

It is found in the secreted. The enzyme catalyses ochratoxin A + H2O = ochratoxin alpha + L-phenylalanine. With respect to regulation, the Zn(2+)-specific chelator 1,10-phenanthroline inhibits the enzyme activity. Functionally, carboxypeptidase that catalyzes the release of a C-terminal amino acid with specific catalytic activity for aromatic amino acids such as phenylalanine. Is able to degrade ochratoxin A, one of the five major mycotoxins most harmful to humans and animals that is produced by Aspergillus and Penicillium species and occurs in a wide range of agricultural products. The polypeptide is Ochratoxinase (Aspergillus niger (strain ATCC MYA-4892 / CBS 513.88 / FGSC A1513)).